Reading from the N-terminus, the 342-residue chain is MITHQQALNRLIDGNELFFDEMLDIMRQIMRGDMTPAQIAGILIGLRVKVESVSEIAAAATVMREFATTVPVAERRHLVDTCGTGGDGAHTFNISTTAAFIVAAAGAQVAKHGGRSVSSSSGSADVLEALGVKLALSAENVGRCIDEIGLGFMFAPNHHTAMKYVAPVRRELGVRTIFNILGPLTNPAGAENQLMGVFHPDLVGIQARVLSQLGARHAMVVHGRDGLDEISLSGPTLVAELKNGWIREYELDPAEFGFSLCSAADLAAPTAEDSKARLLAVLDNQPGPARDIVCLNAGAAIYVAGVTDSLAEGIRLAQELLTSGAARQKLGQLVELTHKLAA.

5-phospho-alpha-D-ribose 1-diphosphate contacts are provided by residues Gly-83, 86-87, Thr-91, 93-96, 111-119, and Ser-123; these read GD, NIST, and KHGGRSVSS. Gly-83 is a binding site for anthranilate. Ser-95 contributes to the Mg(2+) binding site. Arg-169 is an anthranilate binding site. Mg(2+)-binding residues include Asp-228 and Glu-229.

Belongs to the anthranilate phosphoribosyltransferase family. Homodimer. Requires Mg(2+) as cofactor.

The enzyme catalyses N-(5-phospho-beta-D-ribosyl)anthranilate + diphosphate = 5-phospho-alpha-D-ribose 1-diphosphate + anthranilate. It participates in amino-acid biosynthesis; L-tryptophan biosynthesis; L-tryptophan from chorismate: step 2/5. Catalyzes the transfer of the phosphoribosyl group of 5-phosphorylribose-1-pyrophosphate (PRPP) to anthranilate to yield N-(5'-phosphoribosyl)-anthranilate (PRA). This Laribacter hongkongensis (strain HLHK9) protein is Anthranilate phosphoribosyltransferase.